We begin with the raw amino-acid sequence, 124 residues long: Small ribosomal subunit protein eS6 (124 aa).

The protein belongs to the eukaryotic ribosomal protein eS6 family.

This Methanococcus maripaludis (strain C7 / ATCC BAA-1331) protein is Small ribosomal subunit protein eS6.